We begin with the raw amino-acid sequence, 346 residues long: Small ribosomal subunit biogenesis GTPase RsgA (346 aa).

The tract at residues 1–26 (MAKRKLTQNQTRRIQSNNAKTLHRHK) is disordered. A compositionally biased stretch (polar residues) spans 7 to 20 (TQNQTRRIQSNNAK). The 169-residue stretch at 103–271 (ENEISRPDYY…LIDSPGIREF (169 aa)) folds into the CP-type G domain. GTP-binding positions include 159–162 (NKVD) and 213–221 (GQSGVGKSS). Residues Cys295, Cys300, His302, and Cys308 each contribute to the Zn(2+) site.

The protein belongs to the TRAFAC class YlqF/YawG GTPase family. RsgA subfamily. As to quaternary structure, monomer. Associates with 30S ribosomal subunit, binds 16S rRNA. Zn(2+) serves as cofactor.

The protein resides in the cytoplasm. One of several proteins that assist in the late maturation steps of the functional core of the 30S ribosomal subunit. Helps release RbfA from mature subunits. May play a role in the assembly of ribosomal proteins into the subunit. Circularly permuted GTPase that catalyzes slow GTP hydrolysis, GTPase activity is stimulated by the 30S ribosomal subunit. The protein is Small ribosomal subunit biogenesis GTPase RsgA of Haemophilus influenzae (strain PittGG).